The following is a 316-amino-acid chain: Serpentine receptor class gamma-4 (316 aa).

The next 7 membrane-spanning stretches (helical) occupy residues 21 to 41 (FVYL…IWGT), 50 to 70 (SFFT…FLDV), 99 to 121 (IVYP…LSIN), 140 to 160 (MKKV…NVII), 188 to 208 (FQII…SITL), 229 to 249 (TAWI…FAFF), and 258 to 278 (IFYI…PIVM).

This sequence belongs to the nematode receptor-like protein srg family.

Its subcellular location is the membrane. The sequence is that of Serpentine receptor class gamma-4 (srg-4) from Caenorhabditis elegans.